Reading from the N-terminus, the 456-residue chain is Probable glycine dehydrogenase (decarboxylating) subunit 1 (456 aa).

It belongs to the GcvP family. N-terminal subunit subfamily. In terms of assembly, the glycine cleavage system is composed of four proteins: P, T, L and H. In this organism, the P 'protein' is a heterodimer of two subunits.

The catalysed reaction is N(6)-[(R)-lipoyl]-L-lysyl-[glycine-cleavage complex H protein] + glycine + H(+) = N(6)-[(R)-S(8)-aminomethyldihydrolipoyl]-L-lysyl-[glycine-cleavage complex H protein] + CO2. The glycine cleavage system catalyzes the degradation of glycine. The P protein binds the alpha-amino group of glycine through its pyridoxal phosphate cofactor; CO(2) is released and the remaining methylamine moiety is then transferred to the lipoamide cofactor of the H protein. This chain is Probable glycine dehydrogenase (decarboxylating) subunit 1, found in Rhizorhabdus wittichii (strain DSM 6014 / CCUG 31198 / JCM 15750 / NBRC 105917 / EY 4224 / RW1) (Sphingomonas wittichii).